We begin with the raw amino-acid sequence, 434 residues long: MKKLKSYYMQVRNQQQSLDRKWILPLAIGSICSLFLLLLTNLASSSGQTRLIPFSVYGFRSSVFVESKINPVSVSLTVSVSPPPPPRLAYLISGSSGDGQMLKRTLMALYHPNNQYVVHLDRESSPEERLDLSGFVANHTLFQRFQNVRMIVKANFVTYRGPTMVANTLHAAAILLREGGDWDWFINLSASDYPLVTQDDLLHTFSYLPRDLNFIDHTSNIGWKESHRAKPIIIDPGLYMSKKADVFWVSQKRSMPTAFKLFTGSAWMMLSRPFVDYFIWGWDNLPRIVLMYYANFLSSPEGYFHTVICNAREFTNTTVNSDLHFISWDNPPKQHPHHLTLDDFQRMVDSNAPFARKFRRDEPVLDKIDSELLFRSHGMVTPGGWCIGTRENGSDPCAVIGDTSVIKPGLGAKRIEKLITYLLSTENFRPRQCR.

Topologically, residues 1-21 are cytoplasmic; the sequence is MKKLKSYYMQVRNQQQSLDRK. The signal-anchor for type II membrane protein transmembrane segment at 22 to 42 threads the bilayer; sequence WILPLAIGSICSLFLLLLTNL. Residues 43-434 are Lumenal-facing; the sequence is ASSSGQTRLI…TENFRPRQCR (392 aa). Asn138, Asn187, Asn316, and Asn392 each carry an N-linked (GlcNAc...) asparagine glycan.

This sequence belongs to the glycosyltransferase 14 family.

It localises to the golgi apparatus membrane. Its function is as follows. Beta-glucuronosyltransferase involved in the biosynthesis of type II arabinogalactan (AG). Modifies both the beta-1,6-linked galactan and beta-1,3-linked galactan present in type II AG. This chain is Beta-glucuronosyltransferase GlcAT14B, found in Arabidopsis thaliana (Mouse-ear cress).